Here is a 569-residue protein sequence, read N- to C-terminus: 2-succinyl-5-enolpyruvyl-6-hydroxy-3-cyclohexene-1-carboxylate synthase (569 aa).

This sequence belongs to the TPP enzyme family. MenD subfamily. In terms of assembly, homodimer. Mg(2+) serves as cofactor. The cofactor is Mn(2+). Requires thiamine diphosphate as cofactor.

It catalyses the reaction isochorismate + 2-oxoglutarate + H(+) = 5-enolpyruvoyl-6-hydroxy-2-succinyl-cyclohex-3-ene-1-carboxylate + CO2. The protein operates within quinol/quinone metabolism; 1,4-dihydroxy-2-naphthoate biosynthesis; 1,4-dihydroxy-2-naphthoate from chorismate: step 2/7. It participates in quinol/quinone metabolism; menaquinone biosynthesis. Its function is as follows. Catalyzes the thiamine diphosphate-dependent decarboxylation of 2-oxoglutarate and the subsequent addition of the resulting succinic semialdehyde-thiamine pyrophosphate anion to isochorismate to yield 2-succinyl-5-enolpyruvyl-6-hydroxy-3-cyclohexene-1-carboxylate (SEPHCHC). In Paenarthrobacter aurescens (strain TC1), this protein is 2-succinyl-5-enolpyruvyl-6-hydroxy-3-cyclohexene-1-carboxylate synthase.